The primary structure comprises 144 residues: Peptide methionine sulfoxide reductase MsrB (144 aa).

A compositionally biased stretch (basic and acidic residues) spans 1-12 (MDKQQGELRQRL). Residues 1–25 (MDKQQGELRQRLTPEQYAVTQEAAT) are disordered. The MsrB domain occupies 5–128 (QGELRQRLTP…NSAALKFIPV (124 aa)). C117 functions as the Nucleophile in the catalytic mechanism.

The protein belongs to the MsrB Met sulfoxide reductase family.

The catalysed reaction is L-methionyl-[protein] + [thioredoxin]-disulfide + H2O = L-methionyl-(R)-S-oxide-[protein] + [thioredoxin]-dithiol. The chain is Peptide methionine sulfoxide reductase MsrB from Lactiplantibacillus plantarum (strain ATCC BAA-793 / NCIMB 8826 / WCFS1) (Lactobacillus plantarum).